Consider the following 232-residue polypeptide: Large ribosomal subunit protein uL1 (232 aa).

The protein belongs to the universal ribosomal protein uL1 family. Part of the 50S ribosomal subunit.

Binds directly to 23S rRNA. The L1 stalk is quite mobile in the ribosome, and is involved in E site tRNA release. Functionally, protein L1 is also a translational repressor protein, it controls the translation of the L11 operon by binding to its mRNA. This chain is Large ribosomal subunit protein uL1, found in Alkaliphilus metalliredigens (strain QYMF).